The following is a 674-amino-acid chain: MAASSLPSHNSKFEPKLERAQIAWSEEGVPTSTMFDDVYYSKLDGLAEVNYIFLKHNQLPERFETLLPNSRFCILETGFGAGLNFLTTCLLWLEKSPADAQLHFISLEKFPLTRSELAKAHHAFEEVSEPSNALLDVYPLHLPGWHDVFLYDQRIRLTLWFGHVMKGLPEFDVQVDAWFLDGFTPRKNPDMWQSELYLQMARLSNEATTFATFTAAGDVRRGLAQYGFEVEKAPGYAQKREMCFGRYAHSRPFSSKAPWFERAKGGHPSPKKAIVIGAGLAGATVAYQLASQGLSVTVLEQEKAVAQQASGNLAGAIHPLVTADWNVRSQFYLKGFECSLRWLRPWFDSHSIVGQQNGLMQLAMTETMLQRLQEALTRVGLPKSFAYWCDADQASDLIGQKTDHEGLFFPEAGWVQPTSVVTQCLAHEAIALKQEEAVVSIQPVPDQNSQDWQIMTPNSTYQADVVVVATGALNGDLNEQLNLPIRPVKGQVSHFKAADLKGALKTTVTHRGYSVCGDFGAQSPYAAISGATFEAPDLSPILSDASHIENQRLATEALPNWLADSTDMAGKVGFRPTTPDHLPLIGAVPDFEWMKTAYFEQSHTHAVYRYAEQRYQPGLYVSNGHGARGLMSVFLAAEMIGAMVTGDAQVMPKSLYHAVHPARFAIRHWRSGKR.

Residues 1 to 248 are tRNA (mnm(5)s(2)U34)-methyltransferase; sequence MAASSLPSHN…KREMCFGRYA (248 aa). Positions 276–674 are FAD-dependent cmnm(5)s(2)U34 oxidoreductase; the sequence is IGAGLAGATV…AIRHWRSGKR (399 aa).

This sequence in the N-terminal section; belongs to the methyltransferase superfamily. tRNA (mnm(5)s(2)U34)-methyltransferase family. It in the C-terminal section; belongs to the DAO family. The cofactor is FAD.

It is found in the cytoplasm. The enzyme catalyses 5-aminomethyl-2-thiouridine(34) in tRNA + S-adenosyl-L-methionine = 5-methylaminomethyl-2-thiouridine(34) in tRNA + S-adenosyl-L-homocysteine + H(+). In terms of biological role, catalyzes the last two steps in the biosynthesis of 5-methylaminomethyl-2-thiouridine (mnm(5)s(2)U) at the wobble position (U34) in tRNA. Catalyzes the FAD-dependent demodification of cmnm(5)s(2)U34 to nm(5)s(2)U34, followed by the transfer of a methyl group from S-adenosyl-L-methionine to nm(5)s(2)U34, to form mnm(5)s(2)U34. This chain is tRNA 5-methylaminomethyl-2-thiouridine biosynthesis bifunctional protein MnmC, found in Hydrogenovibrio crunogenus (strain DSM 25203 / XCL-2) (Thiomicrospira crunogena).